Consider the following 433-residue polypeptide: D-amino acid dehydrogenase (433 aa).

3–17 (IVVLGAGVLGVTSAW) lines the FAD pocket.

Belongs to the DadA oxidoreductase family. The cofactor is FAD.

The catalysed reaction is a D-alpha-amino acid + A + H2O = a 2-oxocarboxylate + AH2 + NH4(+). It participates in amino-acid degradation; D-alanine degradation; NH(3) and pyruvate from D-alanine: step 1/1. Functionally, oxidative deamination of D-amino acids. This Paracoccus denitrificans (strain Pd 1222) protein is D-amino acid dehydrogenase.